Consider the following 310-residue polypeptide: Malate dehydrogenase (310 aa).

NAD(+)-binding positions include 7-12 (GAGNVG) and Asp32. Positions 81 and 87 each coordinate substrate. NAD(+) contacts are provided by residues Asn94 and 117–119 (VSN). Residues Asn119 and Arg150 each coordinate substrate. His174 (proton acceptor) is an active-site residue.

The protein belongs to the LDH/MDH superfamily. MDH type 3 family.

It catalyses the reaction (S)-malate + NAD(+) = oxaloacetate + NADH + H(+). Its function is as follows. Catalyzes the reversible oxidation of malate to oxaloacetate. In Chlorobium luteolum (strain DSM 273 / BCRC 81028 / 2530) (Pelodictyon luteolum), this protein is Malate dehydrogenase.